The sequence spans 574 residues: Urease subunit alpha (574 aa).

The Urease domain occupies 131–574; the sequence is GAIDSHIHFI…LPMAQRYLLL (444 aa). Positions 136, 138, and 219 each coordinate Ni(2+). Residue lysine 219 is modified to N6-carboxylysine. Histidine 221 provides a ligand contact to substrate. Histidine 248 and histidine 274 together coordinate Ni(2+). Catalysis depends on histidine 322, which acts as the Proton donor. Aspartate 362 provides a ligand contact to Ni(2+). Positions 384–403 are disordered; the sequence is KVQRGPLPEDAANPRGSRND.

It belongs to the metallo-dependent hydrolases superfamily. Urease alpha subunit family. Heterotrimer of UreA (gamma), UreB (beta) and UreC (alpha) subunits. Three heterotrimers associate to form the active enzyme. Requires Ni cation as cofactor. Post-translationally, carboxylation allows a single lysine to coordinate two nickel ions.

Its subcellular location is the cytoplasm. The catalysed reaction is urea + 2 H2O + H(+) = hydrogencarbonate + 2 NH4(+). It participates in nitrogen metabolism; urea degradation; CO(2) and NH(3) from urea (urease route): step 1/1. The chain is Urease subunit alpha from Prochlorococcus marinus (strain MIT 9313).